The following is a 428-amino-acid chain: MRYTKSEEAMKVAETLMPGGVNSPVRAFKSVDTPAIFMDHGKGSKIYDIDGNEYIDYVLSWGPLILGHRDPQVISHLHEAIDKGTSFGASTLLENKLAQLVIDRVPSIEKVRMVSSGTEATLDTLRLARGYTGRNKIVKFEGCYHGHSDSLLIKAGSGVATLGLPDSPGVPEGIAKNTITVPYNDLDALKIAFEKFGDDIAGVIVEPVAGNMGVVPPIEGFLQGLRNITTEYGALLIFDEVMTGFRVGYHCAQGYFGVTPDLTCLGKVIGGGLPVGAFGGKKEIMDHIAPLGNIYQAGTLSGNPLAMTSGYETLSQLTPETYEYFNMLGDILEDGLKRVFAKHNVPITVNRAGSMIGYFLNEGPVTNFEQANKSDLKLFAEMYREMAKEGVFLPPSQFEGTFLSTAHTKEDIEKTIQAFDTALSRIVK.

The residue at position 267 (lysine 267) is an N6-(pyridoxal phosphate)lysine.

The protein belongs to the class-III pyridoxal-phosphate-dependent aminotransferase family. HemL subfamily. In terms of assembly, homodimer. Requires pyridoxal 5'-phosphate as cofactor.

It is found in the cytoplasm. The catalysed reaction is (S)-4-amino-5-oxopentanoate = 5-aminolevulinate. Its pathway is porphyrin-containing compound metabolism; protoporphyrin-IX biosynthesis; 5-aminolevulinate from L-glutamyl-tRNA(Glu): step 2/2. The chain is Glutamate-1-semialdehyde 2,1-aminomutase 1 from Staphylococcus aureus (strain MW2).